Here is a 264-residue protein sequence, read N- to C-terminus: Adenosylcobinamide-GDP ribazoletransferase (264 aa).

Transmembrane regions (helical) follow at residues 39–59, 63–83, 121–141, 148–168, 201–221, and 241–261; these read IAYA…AILI, ALGL…VLLT, ACAL…LLAL, LALI…LEFL, LLIV…LSVL, and VAGA…LIYA.

This sequence belongs to the CobS family. Mg(2+) serves as cofactor.

The protein localises to the cell inner membrane. The enzyme catalyses alpha-ribazole + adenosylcob(III)inamide-GDP = adenosylcob(III)alamin + GMP + H(+). The catalysed reaction is alpha-ribazole 5'-phosphate + adenosylcob(III)inamide-GDP = adenosylcob(III)alamin 5'-phosphate + GMP + H(+). It participates in cofactor biosynthesis; adenosylcobalamin biosynthesis; adenosylcobalamin from cob(II)yrinate a,c-diamide: step 7/7. Joins adenosylcobinamide-GDP and alpha-ribazole to generate adenosylcobalamin (Ado-cobalamin). Also synthesizes adenosylcobalamin 5'-phosphate from adenosylcobinamide-GDP and alpha-ribazole 5'-phosphate. The sequence is that of Adenosylcobinamide-GDP ribazoletransferase from Azorhizobium caulinodans (strain ATCC 43989 / DSM 5975 / JCM 20966 / LMG 6465 / NBRC 14845 / NCIMB 13405 / ORS 571).